Here is a 1768-residue protein sequence, read N- to C-terminus: Maestro heat-like repeat-containing protein family member 1 homolog (1768 aa).

HEAT repeat units follow at residues 4–47 (TSQV…HQPN), 164–203 (VHNP…AICS), 816–856 (QRLQ…AVHP), 1166–1204 (QSQM…ARGA), 1483–1521 (EQLL…CSST), and 1731–1768 (TISR…HDFH).

The protein belongs to the MROH1 family. As to quaternary structure, homooligomer; homooligomerizes at lysosome scission sites.

It is found in the lysosome membrane. Functionally, lysosome fission factor. Recruited to lysosomes by rab-7 at scission sites and homooligomerizes to mediate the constriction and scission of lysosomal tubules. May sever membranes by inserting amphipathic helices into one bilayer leaflet. Lysosome fission is required to maintain their steady-state number, shape, size, composition and function, and to accomplish regeneration. The sequence is that of Maestro heat-like repeat-containing protein family member 1 homolog from Caenorhabditis elegans.